A 720-amino-acid polypeptide reads, in one-letter code: Probable GTPase-activating protein GYL1 (720 aa).

N-acetylmethionine is present on M1. Residues M1–E52 show a composition bias toward basic and acidic residues. A disordered region spans residues M1–D132. Position 17 is a phosphothreonine (T17). S37 bears the Phosphoserine mark. The segment covering A54–E66 has biased composition (polar residues). Position 73 is a phosphoserine (S73). Residues S95–L108 show a composition bias toward polar residues. Basic and acidic residues predominate over residues E111 to K120. S139 carries the phosphoserine modification. 2 disordered regions span residues S144–L164 and A179–I210. Polar residues predominate over residues A184–N196. The region spanning G297 to G477 is the Rab-GAP TBC domain. Residue K498 forms a Glycyl lysine isopeptide (Lys-Gly) (interchain with G-Cter in SUMO) linkage. Residues Q572–T696 adopt a coiled-coil conformation.

It belongs to the GYP5 family. As to quaternary structure, interacts with GYP5 and RVS167. Is part of SEC4-containing complexes.

Its subcellular location is the cytoplasm. The protein localises to the bud. The protein resides in the bud neck. Its function is as follows. Probable GTPase-activating protein which stimulates the GTP hydrolysis rate by GYP5 of YPT1 and SEC4. Involved in ER to Golgi trafficking and polarized exocytosis. This chain is Probable GTPase-activating protein GYL1 (GYL1), found in Saccharomyces cerevisiae (strain ATCC 204508 / S288c) (Baker's yeast).